A 178-amino-acid chain; its full sequence is Large ribosomal subunit protein uL6 (178 aa).

It belongs to the universal ribosomal protein uL6 family. Part of the 50S ribosomal subunit.

Its function is as follows. This protein binds to the 23S rRNA, and is important in its secondary structure. It is located near the subunit interface in the base of the L7/L12 stalk, and near the tRNA binding site of the peptidyltransferase center. This Halalkalibacterium halodurans (strain ATCC BAA-125 / DSM 18197 / FERM 7344 / JCM 9153 / C-125) (Bacillus halodurans) protein is Large ribosomal subunit protein uL6.